The primary structure comprises 136 residues: Large ribosomal subunit protein uL16 (136 aa).

It belongs to the universal ribosomal protein uL16 family. As to quaternary structure, part of the 50S ribosomal subunit.

In terms of biological role, binds 23S rRNA and is also seen to make contacts with the A and possibly P site tRNAs. This chain is Large ribosomal subunit protein uL16, found in Rickettsia canadensis (strain McKiel).